A 386-amino-acid polypeptide reads, in one-letter code: Acetylornithine aminotransferase (386 aa).

Pyridoxal 5'-phosphate contacts are provided by residues 96 to 97 and Phe-123; that span reads GA. Arg-126 contacts N(2)-acetyl-L-ornithine. 208-211 is a pyridoxal 5'-phosphate binding site; sequence DEVQ. Lys-237 is modified (N6-(pyridoxal phosphate)lysine). A N(2)-acetyl-L-ornithine-binding site is contributed by Ser-265. Thr-266 is a binding site for pyridoxal 5'-phosphate.

It belongs to the class-III pyridoxal-phosphate-dependent aminotransferase family. ArgD subfamily. Homodimer. Requires pyridoxal 5'-phosphate as cofactor.

It localises to the cytoplasm. It carries out the reaction N(2)-acetyl-L-ornithine + 2-oxoglutarate = N-acetyl-L-glutamate 5-semialdehyde + L-glutamate. It functions in the pathway amino-acid biosynthesis; L-arginine biosynthesis; N(2)-acetyl-L-ornithine from L-glutamate: step 4/4. This chain is Acetylornithine aminotransferase, found in Bacillus anthracis.